A 174-amino-acid chain; its full sequence is Transcription antitermination protein NusB (174 aa).

Belongs to the NusB family.

In terms of biological role, involved in transcription antitermination. Required for transcription of ribosomal RNA (rRNA) genes. Binds specifically to the boxA antiterminator sequence of the ribosomal RNA (rrn) operons. This is Transcription antitermination protein NusB from Rhodopseudomonas palustris (strain ATCC BAA-98 / CGA009).